Consider the following 238-residue polypeptide: Probable transcriptional regulatory protein YeeN (238 aa).

Belongs to the TACO1 family. YeeN subfamily.

The protein resides in the cytoplasm. This Salmonella choleraesuis (strain SC-B67) protein is Probable transcriptional regulatory protein YeeN.